Here is a 120-residue protein sequence, read N- to C-terminus: Ribosomal protein eL22-like 1 (120 aa).

This sequence belongs to the eukaryotic ribosomal protein eL22 family.

This Xenopus tropicalis (Western clawed frog) protein is Ribosomal protein eL22-like 1 (rpl22l1).